Reading from the N-terminus, the 390-residue chain is MDFWLWPLYFLPVSGALRILPEVKVEGELGGSVTIKCPLPEMHVRIYLCREMAGSGTCGTVVSTTNFIKAEYKGRVTLKQYPRKNLFLVEVTQLTESDSGVYACGAGMNTDRGKTQKVTLNVHSEYEPSWEEQPMPETPKWFHLPYLFQMPAYASSSKFVTRVTTPAQRGKVPPVHHSSPTTQITHRPRVSRASSVAGDKPRTFLPSTTASKISALEGLLKPQTPSYNHHTRLHRQRALDYGSQSGREGQGFHILIPTILGLFLLALLGLVVKRAVERRKALSRRARRLAVRMRALESSQRPRGSPRPRSQNNIYSACPRRARGADAAGTGEAPVPGPGAPLPPAPLQVSESPWLHAPSLKTSCEYVSLYHQPAAMMEDSDSDDYINVPA.

The first 16 residues, methionine 1 to alanine 16, serve as a signal peptide directing secretion. The Extracellular segment spans residues leucine 17–glycine 251. The 101-residue stretch at valine 23–histidine 123 folds into the Ig-like domain. The CDR4 stretch occupies residues valine 33–threonine 115. 2 disulfide bridges follow: cysteine 37–cysteine 104 and cysteine 49–cysteine 58. A CDR1 region spans residues proline 40–arginine 45. The tract at residues glycine 59–alanine 70 is CDR2. Threonine 92 is subject to Phosphothreonine. Residues alanine 106–threonine 115 are CDR3. Positions proline 166–phenylalanine 204 are disordered. A helical membrane pass occupies residues phenylalanine 252–valine 272. Topologically, residues lysine 273 to alanine 390 are cytoplasmic. Composition is skewed to low complexity over residues methionine 293–glutamine 311 and alanine 325–proline 334. The tract at residues methionine 293 to glutamine 348 is disordered. Over residues valine 335 to proline 346 the composition is skewed to pro residues.

In terms of assembly, interacts (via Ig-like domain) with IGHM (via CH4/Cmu4 domain), both secreted and membrane-bound IgM; the interaction is glycan-independent and multivalent theoretically involving up to eight binding sites for the IgM pentamer. Phosphorylated on both Tyr and Ser residues. Post-translationally, O-glycosylated. Sialylated. O-linked glycans regulate trafficking to the plasma membrane. Expressed by CD19-positive B cells and CD4-positive and CD8-positive T cell populations in primary and secondary lymphoid tissues (at protein level). Among B cell subsets, detected in a subset of bone marrow pro- and pre-B cells, in most follicular and memory B cells and in a small subset of germinal center B cells (at protein level). Expressed at lower levels in CD56-positive NK cells (at protein level). Expressed in lymph nodes, lung, thymus and kidneys. Very weak expression detected in spleen, liver, heart, and salivary gland.

The protein localises to the cell membrane. Its subcellular location is the early endosome membrane. It localises to the golgi apparatus. The protein resides in the trans-Golgi network membrane. It is found in the lysosome membrane. The protein localises to the secreted. In terms of biological role, high-affinity Fc receptor for immunoglobulin M (IgM), both secreted and membrane-bound IgM. Primarily regulates IgM transport and homeostasis. In lymphoid cells, enables exocytosis of membrane-bound IgM on the plasma membrane as well as endocytosis of IgM-antigen complexes toward lysosomes for degradation. In mucosal epithelium, mediates retrotranscytosis of antigen-IgM complexes across mucosal M cells toward antigen-presenting cells in mucosal lymphoid tissues. Triggers costimulatory signaling and mediates most of IgM effector functions involved in B cell development and primary immune response to infection. Likely limits tonic IgM BCR signaling to self-antigens for proper negative selection of autoreactive B cells in the bone marrow and for the maintenance of regulatory B cell pool in peripheral lymphoid organs. Mediates antibody responses to T cell-dependent and T cell-independent antigens and promotes induction of an efficient neutralizing IgG response. Engages in cross-talk with antigen-receptor signaling via the non-canonical NF-kappa-B, MAP kinases and calcium signaling pathways. This chain is Immunoglobulin mu Fc receptor, found in Homo sapiens (Human).